A 286-amino-acid polypeptide reads, in one-letter code: ATP synthase gamma chain (286 aa).

This sequence belongs to the ATPase gamma chain family. In terms of assembly, F-type ATPases have 2 components, CF(1) - the catalytic core - and CF(0) - the membrane proton channel. CF(1) has five subunits: alpha(3), beta(3), gamma(1), delta(1), epsilon(1). CF(0) has three main subunits: a, b and c.

Its subcellular location is the cell inner membrane. Its function is as follows. Produces ATP from ADP in the presence of a proton gradient across the membrane. The gamma chain is believed to be important in regulating ATPase activity and the flow of protons through the CF(0) complex. This is ATP synthase gamma chain from Shewanella frigidimarina (strain NCIMB 400).